A 349-amino-acid chain; its full sequence is Phosphoribosylformylglycinamidine cyclo-ligase (349 aa).

Belongs to the AIR synthase family.

Its subcellular location is the cytoplasm. It carries out the reaction 2-formamido-N(1)-(5-O-phospho-beta-D-ribosyl)acetamidine + ATP = 5-amino-1-(5-phospho-beta-D-ribosyl)imidazole + ADP + phosphate + H(+). Its pathway is purine metabolism; IMP biosynthesis via de novo pathway; 5-amino-1-(5-phospho-D-ribosyl)imidazole from N(2)-formyl-N(1)-(5-phospho-D-ribosyl)glycinamide: step 2/2. The polypeptide is Phosphoribosylformylglycinamidine cyclo-ligase (Methanococcus maripaludis (strain DSM 14266 / JCM 13030 / NBRC 101832 / S2 / LL)).